Consider the following 147-residue polypeptide: Histone H3.X (147 aa).

A compositionally biased stretch (low complexity) spans 1–16; that stretch reads MARTKQTARKATAWQA. A disordered region spans residues 1 to 43; that stretch reads MARTKQTARKATAWQAPRKPLATKAARKRASPTGGIKKPHRYK. Arg-3 bears the Asymmetric dimethylarginine mark. Arg-3 carries the citrulline; alternate modification. Thr-4 bears the Phosphothreonine mark. Lys-5 carries the allysine; alternate modification. Residue Lys-5 is modified to N6,N6,N6-trimethyllysine; alternate. Lys-5 is modified (N6,N6-dimethyllysine; alternate). An N6-(2-hydroxyisobutyryl)lysine; alternate modification is found at Lys-5. Lys-5 bears the N6-(beta-hydroxybutyryl)lysine; alternate mark. Position 5 is an N6-acetyllysine; alternate (Lys-5). The residue at position 5 (Lys-5) is an N6-crotonyllysine; alternate. Lys-5 is modified (N6-methyllysine; alternate). Gln-6 is modified (5-glutamyl dopamine; alternate). Gln-6 carries the 5-glutamyl serotonin; alternate modification. Thr-7 bears the Phosphothreonine mark. Arg-9 carries the citrulline; alternate modification. Arg-9 carries the post-translational modification Symmetric dimethylarginine. The residue at position 10 (Lys-10) is an N6,N6,N6-trimethyllysine; alternate. Lys-10 is subject to N6,N6-dimethyllysine; alternate. Lys-10 carries the N6-(2-hydroxyisobutyryl)lysine; alternate modification. N6-(beta-hydroxybutyryl)lysine; alternate is present on Lys-10. At Lys-10 the chain carries N6-acetyllysine; alternate. Lys-10 is subject to N6-crotonyllysine; alternate. The residue at position 10 (Lys-10) is an N6-methyllysine; alternate. Lys-10 bears the N6-butyryllysine; alternate mark. N6-lactoyllysine; alternate is present on Lys-10. Thr-12 is modified (phosphothreonine). Residue Arg-18 is modified to Asymmetric dimethylarginine. Position 18 is a citrulline; alternate (Arg-18). Residues Lys-19 and Lys-24 each carry the N6-(2-hydroxyisobutyryl)lysine; alternate modification. 2 positions are modified to N6-(beta-hydroxybutyryl)lysine; alternate: Lys-19 and Lys-24. An N6-acetyllysine; alternate mark is found at Lys-19 and Lys-24. Residues Lys-19 and Lys-24 each carry the N6-crotonyllysine; alternate modification. Lys-19 and Lys-24 each carry N6-methyllysine; alternate. N6-butyryllysine; alternate is present on residues Lys-19 and Lys-24. Residues Lys-19 and Lys-24 each carry the N6-lactoyllysine; alternate modification. Lys-19 and Lys-24 each carry N6-glutaryllysine; alternate. Arg-27 bears the Citrulline mark. An N6,N6,N6-trimethyllysine; alternate mark is found at Lys-28 and Lys-37. N6,N6-dimethyllysine; alternate is present on residues Lys-28 and Lys-37. An N6-(2-hydroxyisobutyryl)lysine; alternate mark is found at Lys-28 and Lys-37. Lys-28 is subject to N6-(beta-hydroxybutyryl)lysine; alternate. Lys-28 and Lys-37 each carry N6-acetyllysine; alternate. Lys-28 is modified (N6-crotonyllysine; alternate). N6-methyllysine; alternate occurs at positions 28 and 37. Position 28 is an N6-lactoyllysine; alternate (Lys-28). An N6-glutaryllysine; alternate modification is found at Lys-28. Lys-38 is modified (N6-methyllysine). The residue at position 42 (Tyr-42) is a Phosphotyrosine. Lys-57 is modified (N6,N6,N6-trimethyllysine; alternate). Lys-57 bears the N6-(2-hydroxyisobutyryl)lysine; alternate mark. Lys-57 bears the N6-(beta-hydroxybutyryl)lysine; alternate mark. Residue Lys-57 is modified to N6-acetyllysine; alternate. An N6-crotonyllysine; alternate modification is found at Lys-57. The residue at position 57 (Lys-57) is an N6-lactoyllysine; alternate. Residue Lys-57 is modified to N6-glutaryllysine; alternate. Residue Lys-57 is modified to N6-methyllysine. Position 57 is an N6-succinyllysine; alternate (Lys-57). A Phosphoserine modification is found at Ser-58. Lys-65 carries the post-translational modification N6-(2-hydroxyisobutyryl)lysine; alternate. Lys-65 is subject to N6-methyllysine; alternate. Residue Ser-87 is modified to Phosphoserine. Position 108 is a phosphothreonine (Thr-108).

Belongs to the histone H3 family. As to quaternary structure, the nucleosome is a histone octamer containing two molecules each of H2A, H2B, H3 and H4 assembled in one H3-H4 heterotetramer and two H2A-H2B heterodimers. The octamer wraps approximately 147 bp of DNA. In terms of processing, acetylation is generally linked to gene activation. Acetylation on Lys-10 (H3K9ac) impairs methylation at Arg-9 (H3R8me2s). Acetylation on Lys-19 (H3K18ac) and Lys-24 (H3K24ac) favors methylation at Arg-18 (H3R17me). Citrullination at Arg-9 (H3R8ci) and/or Arg-18 (H3R17ci) impairs methylation and represses transcription. Post-translationally, asymmetric dimethylation at Arg-18 (H3R17me2a) is linked to gene activation. Symmetric dimethylation at Arg-9 (H3R8me2s) is linked to gene repression. Asymmetric dimethylation at Arg-3 (H3R2me2a) is linked to gene repression and is mutually exclusive with H3 Lys-5 methylation (H3K4me2 and H3K4me3). H3R2me2a is present at the 3' of genes regardless of their transcription state and is enriched on inactive promoters, while it is absent on active promoters. In terms of processing, methylation at Lys-5 (H3K4me) facilitates subsequent acetylation of H3 and H4. Methylation at Lys-10 (H3K9me) and Lys-28 (H3K27me), which are linked to gene repression, are underrepresented. Methylation at Lys-10 (H3K9me) is a specific target for HP1 proteins (CBX1, CBX3 and CBX5) and prevents subsequent acetylation of H3 and H4. Phosphorylation at Thr-7 (H3T6ph) is a specific tag for epigenetic transcriptional activation that prevents demethylation of Lys-5 (H3K4me) by LSD1/KDM1A. At centromeres, specifically phosphorylated at Thr-12 (H3T11ph) from prophase to early anaphase. Phosphorylation at Thr-12 (H3T11ph) is a specific tag for epigenetic transcriptional activation that promotes demethylation of Lys-10 (H3K9me). Phosphorylation at Tyr-42 (H3Y41ph) promotes exclusion of CBX5 (HP1 alpha) from chromatin. Post-translationally, lysine deamination at Lys-5 (H3K4all) to form allysine. Allysine formation only takes place on H3K4me3 and results in gene repression. In terms of processing, crotonylation (Kcr) is specifically present in male germ cells and marks testis-specific genes in post-meiotic cells, including X-linked genes that escape sex chromosome inactivation in haploid cells. Crotonylation marks active promoters and enhancers and confers resistance to transcriptional repressors. It is also associated with post-meiotically activated genes on autosomes. Butyrylation of histones marks active promoters and competes with histone acetylation. It is present during late spermatogenesis. Expressed at low level in some tissues, such as testis and brain.

It is found in the nucleus. The protein localises to the chromosome. Its function is as follows. Primate-specific variant histone H3, which constitutes a core component of nucleosomes. Nucleosomes wrap and compact DNA into chromatin, limiting DNA accessibility to the cellular machineries which require DNA as a template. Histones thereby play a central role in transcription regulation, DNA repair, DNA replication and chromosomal stability. DNA accessibility is regulated via a complex set of post-translational modifications of histones, also called histone code, and nucleosome remodeling. This chain is Histone H3.X, found in Homo sapiens (Human).